The following is a 472-amino-acid chain: Uronate isomerase (472 aa).

Belongs to the metallo-dependent hydrolases superfamily. Uronate isomerase family.

The catalysed reaction is D-glucuronate = D-fructuronate. It carries out the reaction aldehydo-D-galacturonate = keto-D-tagaturonate. The protein operates within carbohydrate metabolism; pentose and glucuronate interconversion. This chain is Uronate isomerase, found in Xanthomonas euvesicatoria pv. vesicatoria (strain 85-10) (Xanthomonas campestris pv. vesicatoria).